Consider the following 2241-residue polypeptide: Large tegument protein deneddylase (2241 aa).

The deubiquitination activity stretch occupies residues 1–238; that stretch reads MKVTQASCHQ…IDLTGVVRES (238 aa). The Peptidase C76 domain maps to 4–226; it reads TQASCHQGDI…AARLVSTYRD (223 aa). Active-site residues include Cys24, Asp160, and His162. The disordered stretch occupies residues 239 to 314; that stretch reads ADTAATTTTA…STTSKTLATA (76 aa). The segment covering 240–250 has biased composition (low complexity); the sequence is DTAATTTTAAP. Residues 251-268 show a composition bias toward pro residues; it reads SLPPLPDPIVDPGCPPGV. Over residues 304-314 the composition is skewed to low complexity; sequence PSTTSKTLATA. Positions 327-331 are interaction with inner tegument protein; it reads SSAVP. Positions 1170–1229 are disordered; sequence RSSQQKMEEQLQETRQQMTETSERLDRSLRQDPGSSSVTRVPEKPFKGQELAGRITPPPA. A compositionally biased stretch (basic and acidic residues) spans 1190–1199; the sequence is TSERLDRSLR.

It belongs to the herpesviridae large tegument protein family. Interacts with host CUL1 and CUL4A; these interactions inhibit the E3 ligase activity of cullins. Interacts with inner tegument protein. Interacts with capsid vertex specific component CVC2. Interacts with the major capsid protein/MCP.

Its subcellular location is the virion tegument. It is found in the host cytoplasm. It localises to the host nucleus. The enzyme catalyses Thiol-dependent hydrolysis of ester, thioester, amide, peptide and isopeptide bonds formed by the C-terminal Gly of ubiquitin (a 76-residue protein attached to proteins as an intracellular targeting signal).. Functionally, large tegument protein that plays multiple roles in the viral cycle. During viral entry, remains associated with the capsid while most of the tegument is detached and participates in the capsid transport toward the host nucleus. Plays a role in the routing of the capsid at the nuclear pore complex and subsequent uncoating. Within the host nucleus, acts as a deneddylase and promotes the degradation of nuclear CRLs (cullin-RING ubiquitin ligases) and thereby stabilizes nuclear CRL substrates, while cytoplasmic CRLs remain unaffected. These modifications prevent host cell cycle S-phase progression and create a favorable environment allowing efficient viral genome replication. Participates later in the secondary envelopment of capsids. Indeed, plays a linker role for the association of the outer viral tegument to the capsids together with the inner tegument protein. The protein is Large tegument protein deneddylase (UL48) of Human cytomegalovirus (strain AD169) (HHV-5).